A 439-amino-acid chain; its full sequence is Proline--tRNA ligase (439 aa).

The protein belongs to the class-II aminoacyl-tRNA synthetase family. ProS type 2 subfamily. Homodimer.

The protein localises to the cytoplasm. It carries out the reaction tRNA(Pro) + L-proline + ATP = L-prolyl-tRNA(Pro) + AMP + diphosphate. In terms of biological role, catalyzes the attachment of proline to tRNA(Pro) in a two-step reaction: proline is first activated by ATP to form Pro-AMP and then transferred to the acceptor end of tRNA(Pro). The protein is Proline--tRNA ligase of Beijerinckia indica subsp. indica (strain ATCC 9039 / DSM 1715 / NCIMB 8712).